The chain runs to 458 residues: MSLPVSPSIFTVSRLNQTVRQLLEMEMGQIWLSAEISNFSQPSSGHWYFTLKDDRAQVRCAMFRNTNRRTTFRPQNGQQVLVRASITLYEPRGDYQLIAESMQPAGDGLLQQQFDQLKQRLSAEGLFDQQFKQPLPSPAKRVGVITSASGAALHDVLQVLQRRDPSLPIIIYPTSVQGAEAPLQIVRAIETANRRDECDVLIVGRGGGSLEDLWSFNDERVARAIFASRIPIVSAVGHETDVTIADFVADLRAPTPSAAAELVSRNQLELLRQLQSQQQRMEMAMDYYLAQRQQQFTRINHRLQQQHPHLRLARQQTLLFKLQRRLEDGMQNQLRLSSRRSERAQQRLAQMQPQARIHRYQQRVQQQEYRLQQALERQLNAWRQRFGVACSQLEAVSPLATLARGYSVTQTPRGELLKTTKQAQVGELLKTRLQDGWVESEVKTITLAKKPRKKRAAE.

The protein belongs to the XseA family. As to quaternary structure, heterooligomer composed of large and small subunits.

It localises to the cytoplasm. It catalyses the reaction Exonucleolytic cleavage in either 5'- to 3'- or 3'- to 5'-direction to yield nucleoside 5'-phosphates.. Bidirectionally degrades single-stranded DNA into large acid-insoluble oligonucleotides, which are then degraded further into small acid-soluble oligonucleotides. This chain is Exodeoxyribonuclease 7 large subunit, found in Serratia proteamaculans (strain 568).